A 421-amino-acid polypeptide reads, in one-letter code: MGIKGLAKLLSDEAPDCIREVELKSLHGRKIAIDASMAIYQFLIAVRSGGPNQQATMLTNAEGETTSHIQGMFNRTIRYMTEGIRPVFVFDGKPPDVKSHELIKRREKREKAQAALAVASEEGNVEEQDKQSKRLVRAGTKENEDCRKLLTLMGVPVVTAPCEAEAQAAALCKAGLVYATGTEDMDALTFATPILVRKLTFANASKSMVQTMNYNKVIEGLAISHDQFVDLCIMLGCDYCDTIRGVGPKTALKLIREHGNIEKVIETIDRKKFVVPESWVPNEKKLDAQSDDDDEEGVESPSKEENNGIVDTEELIPAYVQARKLFNEHEVLNDIELKWKPCQAEDLQKFLVDDMGFNVDRVKNNIEKLQAAYKANSKPQTRMDSFFAVKANPNAAKSAAKRKADAAKAKAAVSKKKTKKH.

Positions 1–109 (MGIKGLAKLL…HELIKRREKR (109 aa)) are N-domain. Asp34 lines the Mg(2+) pocket. DNA-binding residues include Arg47 and Arg75. Residues Asp91, Glu163, Glu165, Asp184, and Asp186 each contribute to the Mg(2+) site. The interval 127 to 258 (EQDKQSKRLV…KTALKLIREH (132 aa)) is I-domain. Glu163 serves as a coordination point for DNA. Residues Gly236 and Asp238 each contribute to the DNA site. Asp238 is a Mg(2+) binding site. The interval 284 to 307 (KKLDAQSDDDDEEGVESPSKEENN) is disordered. A compositionally biased stretch (acidic residues) spans 289 to 298 (QSDDDDEEGV). An interaction with PCNA region spans residues 379-387 (PQTRMDSFF). Positions 398–421 (SAAKRKADAAKAKAAVSKKKTKKH) are disordered.

Belongs to the XPG/RAD2 endonuclease family. FEN1 subfamily. As to quaternary structure, interacts with PCNA. Three molecules of FEN1 bind to one PCNA trimer with each molecule binding to one PCNA monomer. PCNA stimulates the nuclease activity without altering cleavage specificity. It depends on Mg(2+) as a cofactor. Post-translationally, phosphorylated. Phosphorylation upon DNA damage induces relocalization to the nuclear plasma.

It localises to the nucleus. The protein resides in the nucleolus. The protein localises to the nucleoplasm. Its subcellular location is the mitochondrion. Functionally, structure-specific nuclease with 5'-flap endonuclease and 5'-3' exonuclease activities involved in DNA replication and repair. During DNA replication, cleaves the 5'-overhanging flap structure that is generated by displacement synthesis when DNA polymerase encounters the 5'-end of a downstream Okazaki fragment. It enters the flap from the 5'-end and then tracks to cleave the flap base, leaving a nick for ligation. Also involved in the long patch base excision repair (LP-BER) pathway, by cleaving within the apurinic/apyrimidinic (AP) site-terminated flap. Acts as a genome stabilization factor that prevents flaps from equilibrating into structures that lead to duplications and deletions. Also possesses 5'-3' exonuclease activity on nicked or gapped double-stranded DNA, and exhibits RNase H activity. Also involved in replication and repair of rDNA and in repairing mitochondrial DNA. The chain is Flap endonuclease 1 from Phaeodactylum tricornutum (strain CCAP 1055/1).